A 443-amino-acid chain; its full sequence is Minovincinine 19-hydroxy-O-acetyltransferase (443 aa).

The active-site Proton acceptor is His-157. The Nuclear localization signal signature appears at 215–222 (RKRFLFSP). A coiled-coil region spans residues 316 to 343 (TKLVIGELRKAKDKLKNLSQEKLNYVAR). Asp-384 serves as the catalytic Proton acceptor.

Belongs to the plant acyltransferase family. As to quaternary structure, monomer. In terms of tissue distribution, expressed in cortical cells of the root tip, especially in hairy roots, as well as in etiolated seedlings. Mostly expressed in roots, and, at lower levels, in leaves.

It is found in the cytoplasm. The protein localises to the nucleus. It catalyses the reaction (+)-minovincinine + acetyl-CoA = (+)-echitovenine + CoA. Its pathway is alkaloid biosynthesis. Its function is as follows. Component of the monoterpenoid indole alkaloids (MIAs, e.g. echitovenine, tabersonine, lochnericine, 19-hydroxytabersonine and horhammericine) biosynthetic pathway; MIAs are used in cancer treatment and other medical applications. Acyltransferase catalyzing the conversion of (+)-minovincinine to (+)-echitovenine. The chain is Minovincinine 19-hydroxy-O-acetyltransferase from Catharanthus roseus (Madagascar periwinkle).